The following is a 359-amino-acid chain: Mitochondrial glutathione transporter SLC25A39 (359 aa).

The Mitochondrial intermembrane portion of the chain corresponds to 1–14 (MDDQDPGGISPLQQ). Solcar repeat units follow at residues 9-151 (ISPL…LKAF), 159-243 (SDLY…VKSW), and 253-347 (TSVG…GKSF). A helical transmembrane segment spans residues 15–35 (MVASGAGAVVTSLFMTPLDVV). The Mitochondrial matrix segment spans residues 36-121 (KVRLQSQRPS…VKIVRHEGTR (86 aa)). [2Fe-2S] cluster is bound by residues C74, C78, C88, and C94. The chain crosses the membrane as a helical span at residues 122–142 (TLWSGLPATLVMTVPATAIYF). Residues 143-164 (TAYDQLKAFLCGQSLTSDLYAP) are Mitochondrial intermembrane-facing. Residues 165–185 (MVAGALARMGTVTVVSPLELV) form a helical membrane-spanning segment. Over 186–214 (RTKLQAQHVSYRELASSVQAAVTQGGWRS) the chain is Mitochondrial matrix. The helical transmembrane segment at 215-235 (LWLGWGPTALRDVPFSALYWF) threads the bilayer. Residues 236–255 (NYELVKSWLSGLRPKDQTSV) are Mitochondrial intermembrane-facing. Residues 256 to 276 (GISFVAGGISGMVAATLTLPF) form a helical membrane-spanning segment. Topologically, residues 277–317 (DVVKTQRQMSLGAVEAVRVKPPRVDSTWLLLRRIRAESGTR) are mitochondrial matrix. A helical membrane pass occupies residues 318–338 (GLFAGFLPRIIKAAPSCAIMI). The Mitochondrial intermembrane portion of the chain corresponds to 339–359 (STYEFGKSFFQRLNQEQPLGR).

The protein belongs to the mitochondrial carrier (TC 2.A.29) family. Cleaved and degraded by AFG3L2; degradation by AFG3L2 is regulated by the ability of SLC25A39 to bind iron-sulfur. In absence of mitochondrial glutathione, SLC25A39 binds iron-sulfur, preventing cleavage and degradation by AFG3L2. The presence of mitochondrial glutathione prevents iron-sulfur-binding to SLC25A39, promoting cleavage and degradation by AFG3L2. As to expression, abundant expression in bone marrow, spleen, testis and kidney.

Its subcellular location is the mitochondrion inner membrane. It carries out the reaction glutathione(in) = glutathione(out). The activity of SLC25A39 is regulated by levels of mitochondrial glutathione via its ability to bind [2Fe-2S] iron-sulfur cluster. Upon physiological levels of mitochondrial glutathione, glutathione prevents iron-sulfur-binding to SLC25A39 promoting cleavage and degradation by AFG3L2. Upon depletion of mitochondrial glutathione, SLC25A39 binds iron-sulfur, preventing cleavage and degradation by AFG3L2. Mitochondrial transporter required for glutathione import into mitochondria. Glutathione, which plays key roles in oxidative metabolism, is produced exclusively in the cytosol and is imported in many organelles. Mitochondrial glutathione is required for the activity and stability of proteins containing iron-sulfur clusters, as well as erythropoiesis. In Mus musculus (Mouse), this protein is Mitochondrial glutathione transporter SLC25A39.